The sequence spans 117 residues: Large ribosomal subunit protein uL18 (117 aa).

Belongs to the universal ribosomal protein uL18 family. As to quaternary structure, part of the 50S ribosomal subunit; part of the 5S rRNA/L5/L18/L25 subcomplex. Contacts the 5S and 23S rRNAs.

This is one of the proteins that bind and probably mediate the attachment of the 5S RNA into the large ribosomal subunit, where it forms part of the central protuberance. The protein is Large ribosomal subunit protein uL18 of Pseudoalteromonas atlantica (strain T6c / ATCC BAA-1087).